The chain runs to 500 residues: 7-alpha-hydroxycholest-4-en-3-one 12-alpha-hydroxylase (500 aa).

The chain crosses the membrane as a helical span at residues 2–21 (VLWGLLGALLMVMVGWLCLP). Ser325 is subject to Phosphoserine. A heme-binding site is contributed by Cys439.

This sequence belongs to the cytochrome P450 family. The cofactor is heme. In terms of tissue distribution, liver (at protein level).

It is found in the endoplasmic reticulum membrane. It localises to the microsome membrane. The enzyme catalyses 7alpha-hydroxycholest-4-en-3-one + reduced [NADPH--hemoprotein reductase] + O2 = 7alpha,12alpha-dihydroxycholest-4-en-3-one + oxidized [NADPH--hemoprotein reductase] + H2O + H(+). It catalyses the reaction 5beta-cholestane-3alpha,7alpha-diol + reduced [NADPH--hemoprotein reductase] + O2 = 5beta-cholestane-3alpha,7alpha,12alpha-triol + oxidized [NADPH--hemoprotein reductase] + H2O + H(+). The catalysed reaction is chenodeoxycholate + reduced [NADPH--hemoprotein reductase] + O2 = cholate + oxidized [NADPH--hemoprotein reductase] + H2O + H(+). Its pathway is lipid metabolism; bile acid biosynthesis. Its activity is regulated as follows. Up-regulated upon treatment with streptozotocin. A cytochrome P450 monooxygenase involved in primary bile acid biosynthesis. Catalyzes the 12alpha-hydroxylation of 7alpha-hydroxy-4-cholesten-3-one, an intermediate metabolite in cholic acid biosynthesis. Controls biliary balance of cholic acid and chenodeoxycholic acid, ultimately regulating the intestinal absorption of dietary lipids. Mechanistically, uses molecular oxygen inserting one oxygen atom into a substrate, and reducing the second into a water molecule, with two electrons provided by NADPH via cytochrome P450 reductase (CPR; NADPH--hemoprotein reductase). This Oryctolagus cuniculus (Rabbit) protein is 7-alpha-hydroxycholest-4-en-3-one 12-alpha-hydroxylase (CYP8B1).